The sequence spans 378 residues: UPF0754 membrane protein BCE_0952 (378 aa).

2 helical membrane passes run 1–21 and 357–377; these read MNIW…GGFT and YLGA…LLFL.

Belongs to the UPF0754 family.

Its subcellular location is the cell membrane. The chain is UPF0754 membrane protein BCE_0952 from Bacillus cereus (strain ATCC 10987 / NRS 248).